The following is a 150-amino-acid chain: Large ribosomal subunit protein eL19 (150 aa).

Residues 59–89 (SRYRARIRHEQKKKGRHRGPGSRKGKKTARM) form a disordered region. The segment covering 61-89 (YRARIRHEQKKKGRHRGPGSRKGKKTARM) has biased composition (basic residues).

It belongs to the eukaryotic ribosomal protein eL19 family. As to quaternary structure, part of the 50S ribosomal subunit.

Functionally, binds to the 23S rRNA. The sequence is that of Large ribosomal subunit protein eL19 from Pyrococcus horikoshii (strain ATCC 700860 / DSM 12428 / JCM 9974 / NBRC 100139 / OT-3).